A 183-amino-acid chain; its full sequence is MSDDTEWSEDILNRLNVRDQYEKKDSRYFKAFSQLSQEARTNDQASNNDKSIEYNKLLKENNQLKKDNEILTTSLNQTTISLEKSDLKINQLLKSQDQLERHNTSLNNKIKHLNLEIIEKNKSVEILNDELLLNEIQTNVLNDKITRLSDENKKLVERWIEKAKSDAEKLNDANEFLESVNRK.

Residues 44-183 (QASNNDKSIE…NEFLESVNRK (140 aa)) adopt a coiled-coil conformation.

This sequence belongs to the ATG16 family. In terms of assembly, homodimer. Part of the ATG5-ATG12/ATG16 complex. Several units of each may be present in this complex.

The protein localises to the preautophagosomal structure membrane. Its function is as follows. Stabilizes the ATG5-ATG12 conjugate which is necessary for autophagy. The ATG5-ATG12/ATG16 complex is required for efficient promotion of ATG8-conjugation to phosphatidylethanolamine and ATG8 localization to the pre-autophagosomal structure (PAS). Also recruits ATG3 to the PAS. Involved in endoplasmic reticulum-specific autophagic process and is essential for the survival of cells subjected to severe ER stress. The polypeptide is Autophagy protein 16 (ATG16) (Debaryomyces hansenii (strain ATCC 36239 / CBS 767 / BCRC 21394 / JCM 1990 / NBRC 0083 / IGC 2968) (Yeast)).